We begin with the raw amino-acid sequence, 1456 residues long: ABC-type transporter eriD (1456 aa).

Residues 1–65 are disordered; that stretch reads MAENEKVTYG…DPRMDPLSGK (65 aa). A compositionally biased stretch (polar residues) spans 30–40; it reads SMTNASRSSVY. The region spanning 118–372 is the ABC transporter 1 domain; that stretch reads LDIPGLARDI…FIDMGFECPP (255 aa). The next 6 membrane-spanning stretches (helical) occupy residues 481-501, 515-535, 561-581, 590-610, 623-643, and 734-754; these read NFLTSVIGNFILALIISSIFY, ALLFFAILMNAFASSLEILQI, VLCDLPGKVIASFAFNLVLYF, GAFFTFYLFSLMCILVMSMIF, AMAPSSVILLALVIFTGFTIP, and ILFGFIAFFACTYLFATEFIA. The interval 775–799 is disordered; the sequence is EGASEDEEAGTGSTGTRTQEEPVDK. The ABC transporter 2 domain maps to 813-1056; the sequence is FHWEDVIYDI…IIDYFEGQGA (244 aa). 849–856 provides a ligand contact to ATP; the sequence is GASGAGKT. 7 consecutive transmembrane segments (helical) span residues 1148-1168, 1184-1204, 1233-1253, 1269-1289, 1301-1321, 1337-1357, and 1423-1443; these read YIYSKIFLVAGSNLLIGFSFF, VFMGLTVFGNLVNQIMPHFVT, LPWNTLAGVVLFFCWYYPVGM, LMFLLIWQFMLFTSTFAHMLI, IASLLFSLTFLFCGVLAGPSG, PFTYLVEAMVSVGVANAPAFC, and FGFLWVFILFNIGMAVFFYWL.

The protein belongs to the ABC transporter superfamily. ABCG family. PDR (TC 3.A.1.205) subfamily.

The protein resides in the membrane. Its function is as follows. ABC-type transporter; part of the gene cluster that mediates the biosynthesis of erinacines, cyathane-xylosides that show unique biological activities, including leishmanicidal activity, stimulating activity for nerve growth-factor synthesis, and agonistic activity toward the kappa opioid receptor. This is ABC-type transporter eriD from Hericium erinaceus (Lion's mane mushroom).